Here is a 130-residue protein sequence, read N- to C-terminus: Glycoprotein hormone beta-5 (130 aa).

The N-terminal stretch at 1–24 (MKLAFLFLGPMALLLLAGYGCVLG) is a signal peptide. Cystine bridges form between Cys36-Cys84, Cys50-Cys99, Cys60-Cys115, Cys64-Cys117, and Cys120-Cys127. A glycan (N-linked (GlcNAc...) asparagine) is linked at Asn87.

This sequence belongs to the glycoprotein hormones subunit beta family. Heterodimer with GPHA2; this heterodimer interacts with thyroid-stimulating hormone receptor (TSHR), and hence stimulates cAMP production. Post-translationally, N-glycosylated. Highly expressed in brain and at low levels in pituitary. Also found in retina, testis and skin but not in pancreas, parotid, kidney, stomach, liver, colon, small intestine, thyroid, brain or adrenal gland. In pituitary, colocalizes with ACTH, suggesting that it is located in corticotrophs.

The protein resides in the secreted. In terms of biological role, functions as a heterodimeric glycoprotein hormone with GPHA2 able to bind and activate the thyroid-stimulating hormone receptor (TSHR), leading to increased cAMP production. Plays a central role in controlling thyroid cell metabolism. This is Glycoprotein hormone beta-5 (GPHB5) from Homo sapiens (Human).